We begin with the raw amino-acid sequence, 426 residues long: Serine hydroxymethyltransferase (426 aa).

(6S)-5,6,7,8-tetrahydrofolate-binding positions include Leu-113 and 117–119 (GHL). An N6-(pyridoxal phosphate)lysine modification is found at Lys-222. 363-365 (SAF) is a binding site for (6S)-5,6,7,8-tetrahydrofolate.

This sequence belongs to the SHMT family. Homodimer. It depends on pyridoxal 5'-phosphate as a cofactor.

The protein resides in the cytoplasm. The enzyme catalyses (6R)-5,10-methylene-5,6,7,8-tetrahydrofolate + glycine + H2O = (6S)-5,6,7,8-tetrahydrofolate + L-serine. It functions in the pathway one-carbon metabolism; tetrahydrofolate interconversion. Its pathway is amino-acid biosynthesis; glycine biosynthesis; glycine from L-serine: step 1/1. Catalyzes the reversible interconversion of serine and glycine with tetrahydrofolate (THF) serving as the one-carbon carrier. This reaction serves as the major source of one-carbon groups required for the biosynthesis of purines, thymidylate, methionine, and other important biomolecules. Also exhibits THF-independent aldolase activity toward beta-hydroxyamino acids, producing glycine and aldehydes, via a retro-aldol mechanism. The sequence is that of Serine hydroxymethyltransferase from Bacteroides fragilis (strain ATCC 25285 / DSM 2151 / CCUG 4856 / JCM 11019 / LMG 10263 / NCTC 9343 / Onslow / VPI 2553 / EN-2).